The primary structure comprises 695 residues: Tail-specific protease (695 aa).

The first 29 residues, methionine 1 to alanine 29, serve as a signal peptide directing secretion. Positions isoleucine 256–lysine 316 constitute a PDZ domain. Catalysis depends on charge relay system residues serine 459, aspartate 470, and lysine 484.

Belongs to the peptidase S41A family.

The protein localises to the cell inner membrane. It carries out the reaction The enzyme shows specific recognition of a C-terminal tripeptide, Xaa-Yaa-Zaa, in which Xaa is preferably Ala or Leu, Yaa is preferably Ala or Tyr, and Zaa is preferably Ala, but then cleaves at a variable distance from the C-terminus. A typical cleavage is -Ala-Ala-|-Arg-Ala-Ala-Lys-Glu-Asn-Tyr-Ala-Leu-Ala-Ala.. Its function is as follows. Involved in the cleavage of a C-terminal peptide of 11 residues from the precursor form of penicillin-binding protein 3 (PBP3). May be involved in protection of the bacterium from thermal and osmotic stresses. The sequence is that of Tail-specific protease (prc) from Haemophilus influenzae (strain ATCC 51907 / DSM 11121 / KW20 / Rd).